A 223-amino-acid polypeptide reads, in one-letter code: Holliday junction branch migration complex subunit RuvA (223 aa).

The segment at 1 to 64 is domain I; sequence MIGRIAGVIL…EDLLQLFGFP (64 aa). The interval 65–143 is domain II; that stretch reads TLLEKEWHRL…AVMALGGALT (79 aa). The segment at 144-169 is flexible linker; it reads VDPGPLPEVELVEAAVPAPVPAKAAP. The segment at 170 to 223 is domain III; the sequence is SSAQATADALSALGNLGYAPSEAASAVAEAAAREPAAPTAALIRAALRLLAPKE.

Belongs to the RuvA family. As to quaternary structure, homotetramer. Forms an RuvA(8)-RuvB(12)-Holliday junction (HJ) complex. HJ DNA is sandwiched between 2 RuvA tetramers; dsDNA enters through RuvA and exits via RuvB. An RuvB hexamer assembles on each DNA strand where it exits the tetramer. Each RuvB hexamer is contacted by two RuvA subunits (via domain III) on 2 adjacent RuvB subunits; this complex drives branch migration. In the full resolvosome a probable DNA-RuvA(4)-RuvB(12)-RuvC(2) complex forms which resolves the HJ.

The protein localises to the cytoplasm. Functionally, the RuvA-RuvB-RuvC complex processes Holliday junction (HJ) DNA during genetic recombination and DNA repair, while the RuvA-RuvB complex plays an important role in the rescue of blocked DNA replication forks via replication fork reversal (RFR). RuvA specifically binds to HJ cruciform DNA, conferring on it an open structure. The RuvB hexamer acts as an ATP-dependent pump, pulling dsDNA into and through the RuvAB complex. HJ branch migration allows RuvC to scan DNA until it finds its consensus sequence, where it cleaves and resolves the cruciform DNA. In Paracoccus denitrificans (strain Pd 1222), this protein is Holliday junction branch migration complex subunit RuvA.